The chain runs to 155 residues: Transcription antitermination protein NusB (155 aa).

Belongs to the NusB family.

Functionally, involved in transcription antitermination. Required for transcription of ribosomal RNA (rRNA) genes. Binds specifically to the boxA antiterminator sequence of the ribosomal RNA (rrn) operons. The protein is Transcription antitermination protein NusB of Ralstonia pickettii (strain 12J).